Consider the following 498-residue polypeptide: UPF0371 protein cauri_2449 (498 aa).

The protein belongs to the UPF0371 family.

This is UPF0371 protein cauri_2449 from Corynebacterium aurimucosum (strain ATCC 700975 / DSM 44827 / CIP 107346 / CN-1) (Corynebacterium nigricans).